We begin with the raw amino-acid sequence, 198 residues long: tRNA (cytidine(56)-2'-O)-methyltransferase (198 aa).

Residues Leu81, 110–114 (GAEKV), and 128–135 (IGNQPHSE) each bind S-adenosyl-L-methionine. The interval 178 to 198 (DAKQAEASGEGASRKNGQLPS) is disordered.

The protein belongs to the aTrm56 family. As to quaternary structure, homodimer.

The protein resides in the cytoplasm. It catalyses the reaction cytidine(56) in tRNA + S-adenosyl-L-methionine = 2'-O-methylcytidine(56) in tRNA + S-adenosyl-L-homocysteine + H(+). Its function is as follows. Specifically catalyzes the AdoMet-dependent 2'-O-ribose methylation of cytidine at position 56 in tRNAs. In Pyrococcus abyssi (strain GE5 / Orsay), this protein is tRNA (cytidine(56)-2'-O)-methyltransferase.